Consider the following 129-residue polypeptide: Sigma factor-binding protein Crl (129 aa).

The tract at residues 99 to 119 (TQNCFHLKLVKTLEENFQLSV) is essential for activity.

The protein belongs to the Crl family.

Its subcellular location is the cytoplasm. In terms of biological role, binds to the sigma-S subunit of RNA polymerase, activating expression of sigma-S-regulated genes. Stimulates RNA polymerase holoenzyme formation and may bind to several other sigma factors, such as sigma-70 and sigma-32. This is Sigma factor-binding protein Crl from Vibrio vulnificus (strain CMCP6).